Consider the following 194-residue polypeptide: HTH-type nicotine-responsive transcriptional repressor HdnoR (194 aa).

The region spanning 6–66 (VDRRQQLIDA…AAAAELLQQL (61 aa)) is the HTH tetR-type domain. The segment at residues 29-48 (SLRTIASEAKASLAAVHVCF) is a DNA-binding region (H-T-H motif).

As to quaternary structure, homodimer.

Its activity is regulated as follows. 6-hydroxy-D-nicotine and 6-hydroxy-L-nicotine prevent HdnoR from binding to the IR1 DNA. Both 6-hydroxy-nicotine enantiomers prevent DNA-protein complex formation at micromolar concentrations, with the D-enantiomer being twice as potent as the L-enantiomer. A thousand-fold higher L-nicotine concentration is required to elicit a similar effect. In terms of biological role, represses expression of the 6-hydroxy-D-nicotine oxidase (6-hdno). Acts by binding to a gene operator site consisting of two inverted repeats, IR1 (covering the 6-hdno promoter region) and IR2 (situated upstream from the 6-hdno promoter). Binding to one site may stimulate binding of the protein to the second site. The polypeptide is HTH-type nicotine-responsive transcriptional repressor HdnoR (Paenarthrobacter nicotinovorans (Arthrobacter nicotinovorans)).